The primary structure comprises 114 residues: UPF0102 protein CD630_12710 (114 aa).

The protein belongs to the UPF0102 family.

The protein is UPF0102 protein CD630_12710 of Clostridioides difficile (strain 630) (Peptoclostridium difficile).